A 138-amino-acid polypeptide reads, in one-letter code: MRTLWIVAVCLIGVEGNLFQFGEMILEKTGKEVVHSYAIYGCYCGWGGQGRAQDATDRCCFVHDCCYGTVNDCNPKTATYSYSFENGDIVCGDNDLCLRTVCECDRAAAICLGQNVNTYDKNYEYYSISHCTEESEQC.

Positions 1–16 (MRTLWIVAVCLIGVEG) are cleaved as a signal peptide. 7 disulfide bridges follow: C42–C131, C44–C60, C59–C111, C65–C138, C66–C104, C73–C97, and C91–C102. Y43, G45, and G47 together coordinate Ca(2+). The active site involves H63. D64 contributes to the Ca(2+) binding site. D105 is an active-site residue.

This sequence belongs to the phospholipase A2 family. Group II subfamily. D49 sub-subfamily. Heterodimer of a weakly toxic basic protein having phospholipase A2 activity (RV-4) and a non-toxic acidic protein which inhibits its enzymatic activity but potentiates its lethal potency and neurotoxicity (RV-7). Ca(2+) serves as cofactor. Expressed by the venom gland.

Its subcellular location is the secreted. The enzyme catalyses a 1,2-diacyl-sn-glycero-3-phosphocholine + H2O = a 1-acyl-sn-glycero-3-phosphocholine + a fatty acid + H(+). In terms of biological role, heterodimer: RV-4/RV-7 targets the presynaptic sites of the neuromuscular junction. Functionally, monomer: snake venom phospholipase A2 (PLA2) RV-7 that has low enzymatic activity and is not toxic. It inhibits the enzymatic activity of RV-4 in vitro but potentiates its lethal potency and neurotoxicity. It may facilitate the specific binding of RV-4 to its presynaptic binding sites, probably by acting as a chaperone, minimizing distraction and destruction of RV-4 en route to the site of action by reducing non-specific binding to muscle and other organs. PLA2 catalyzes the calcium-dependent hydrolysis of the 2-acyl groups in 3-sn-phosphoglycerides. This is Acidic phospholipase A2 RV-7 from Daboia siamensis (Eastern Russel's viper).